A 650-amino-acid polypeptide reads, in one-letter code: Epithelial sodium channel subunit beta (650 aa).

Residues 1–95 (MLLHINPAYL…IICEGPKKKA (95 aa)) are Cytoplasmic-facing. Residues 96–116 (MWFLLTLLFTALVCWQWGIFI) traverse the membrane as a helical segment. The Extracellular segment spans residues 117 to 542 (RTYLSWEVSV…GGQFGFWMGG (426 aa)). 5 cysteine pairs are disulfide-bonded: Cys143/Cys317, Cys229/Cys234, Cys241/Cys248, Cys294/Cys301, and Cys406/Cys458. Asn244 carries N-linked (GlcNAc...) asparagine glycosylation. Asn305 carries an N-linked (GlcNAc...) asparagine glycan. Residues 543–563 (SVLCLIEFGEIIIDFVWITII) traverse the membrane as a helical segment. Residues 564–650 (KLVALAKSLR…IESDSEGDAI (87 aa)) lie on the Cytoplasmic side of the membrane. Residues 600-650 (FQPDTAPRSPNTGPYPNEQALPIPGTPPPNYDSLRLQPLDVIESDSEGDAI) are disordered. Residues 626-630 (PPPNY) carry the PY motif; recruits WW domain-containing proteins and is thereby required for ubiquitination and inhibition of the channel by NEDD4 and NEDD4L motif. Residues 641-650 (IESDSEGDAI) are compositionally biased toward acidic residues. Residues Ser643 and Ser645 each carry the phosphoserine modification.

The protein belongs to the amiloride-sensitive sodium channel (TC 1.A.6) family. SCNN1B subfamily. In terms of assembly, component of the heterotrimeric epithelial sodium channel (ENaC) composed of an alpha/SCNN1A, a beta/SCNN1B and a gamma/SCNN1G subunit. An additional delta/SCNN1D subunit can replace the alpha/SCNN1A subunit to form an alternative channel with specific properties. Interacts with WWP1 (via WW domains). Interacts with WWP2 (via WW domains); inhibits the channel. Interacts with the full-length immature form of PCSK9 (pro-PCSK9). Interacts (N-glycosylated) with BPIFA1; the interaction is direct and inhibits the proteolytic processing of SCNN1A and SCNN1G and the activation of ENaC. In terms of processing, ubiquitinated. Can be ubiquitinated at multiple sites and undergo monoubiquitination and polyubiquitination. Ubiquitination by NEDD4 or NEDD4L inhibits the ENaC channel through endocytosis, intracellular retention and degradation of its individual subunits. However, some studies could not confirm the ubiquitination of this subunit of the ENaC. Phosphorylated on serine and threonine residues. Aldosterone and insulin increase the basal level of phosphorylation. Post-translationally, N-glycosylated. N-glycosylation is required for interaction with BPIFA1.

The protein localises to the apical cell membrane. It is found in the cytoplasmic vesicle membrane. It catalyses the reaction Na(+)(in) = Na(+)(out). With respect to regulation, originally identified and characterized by its inhibition by the diuretic drug amiloride. In terms of biological role, this is one of the three pore-forming subunits of the heterotrimeric epithelial sodium channel (ENaC), a critical regulator of sodium balance and fluid homeostasis. ENaC operates in epithelial tissues, where it mediates the electrodiffusion of sodium ions from extracellular fluid through the apical membrane of cells, with water following osmotically. It plays a key role in maintaining sodium homeostasis through electrogenic sodium reabsorption in the kidneys. Additionally, ENaC is essential for airway surface liquid homeostasis, which is crucial for proper mucus clearance. This is Epithelial sodium channel subunit beta from Pan troglodytes (Chimpanzee).